Reading from the N-terminus, the 122-residue chain is uncharacterized protein (122 aa).

This is an uncharacterized protein from Bacillus subtilis (strain 168).